Consider the following 140-residue polypeptide: Endoribonuclease YbeY (140 aa).

The Zn(2+) site is built by His100, His104, and His110.

This sequence belongs to the endoribonuclease YbeY family. Zn(2+) is required as a cofactor.

It is found in the cytoplasm. Functionally, single strand-specific metallo-endoribonuclease involved in late-stage 70S ribosome quality control and in maturation of the 3' terminus of the 16S rRNA. The protein is Endoribonuclease YbeY of Helicobacter pylori (strain Shi470).